The following is a 273-amino-acid chain: HMP-PP phosphatase (273 aa).

Catalysis depends on Asp8, which acts as the Nucleophile. Mg(2+) is bound by residues Asp8, Asp10, and Asp212.

It belongs to the HAD-like hydrolase superfamily. Cof family. The cofactor is Mg(2+).

It carries out the reaction 4-amino-2-methyl-5-(diphosphooxymethyl)pyrimidine + H2O = 4-amino-2-methyl-5-(phosphooxymethyl)pyrimidine + phosphate + H(+). Its function is as follows. Catalyzes the hydrolysis of 4-amino-2-methyl-5-hydroxymethylpyrimidine pyrophosphate (HMP-PP) to 4-amino-2-methyl-5-hydroxymethylpyrimidine phosphate (HMP-P). In Yersinia pseudotuberculosis serotype I (strain IP32953), this protein is HMP-PP phosphatase.